A 337-amino-acid chain; its full sequence is Protein ABHD13 (337 aa).

The chain crosses the membrane as a helical; Signal-anchor for type II membrane protein span at residues 37–57; sequence FHLYGGIVLLLLIFVSIAGIL. Active-site charge relay system residues include Ser-193, Asp-268, and His-298. Asn-299 is a glycosylation site (N-linked (GlcNAc...) asparagine).

The protein belongs to the serine esterase family.

It is found in the membrane. This Mus musculus (Mouse) protein is Protein ABHD13.